The following is a 152-amino-acid chain: NAD(P)H-quinone oxidoreductase subunit N (152 aa).

It belongs to the complex I NdhN subunit family. NDH-1 can be composed of about 15 different subunits; different subcomplexes with different compositions have been identified which probably have different functions.

It is found in the cellular thylakoid membrane. It catalyses the reaction a plastoquinone + NADH + (n+1) H(+)(in) = a plastoquinol + NAD(+) + n H(+)(out). The enzyme catalyses a plastoquinone + NADPH + (n+1) H(+)(in) = a plastoquinol + NADP(+) + n H(+)(out). In terms of biological role, NDH-1 shuttles electrons from an unknown electron donor, via FMN and iron-sulfur (Fe-S) centers, to quinones in the respiratory and/or the photosynthetic chain. The immediate electron acceptor for the enzyme in this species is believed to be plastoquinone. Couples the redox reaction to proton translocation, and thus conserves the redox energy in a proton gradient. Cyanobacterial NDH-1 also plays a role in inorganic carbon-concentration. This Prochlorococcus marinus (strain SARG / CCMP1375 / SS120) protein is NAD(P)H-quinone oxidoreductase subunit N.